Consider the following 164-residue polypeptide: Protein PPLZ02 (164 aa).

Residues 7–64 (RYRGFRQRHWGSWVSEIRHSILKTRIWQGTFESAEDAARAYDEAARLMCGTRARTNFP) constitute a DNA-binding region (AP2/ERF).

It localises to the nucleus. Functionally, essential for all lupin cells independent of the respective tissue. The polypeptide is Protein PPLZ02 (PPLZ02) (Lupinus polyphyllus (Large-leaved lupine)).